A 548-amino-acid chain; its full sequence is CTP synthase (548 aa).

The tract at residues 1-266 (MRVNYIFVTG…DNYICKRFNL (266 aa)) is amidoligase domain. Serine 14 is a CTP binding site. Serine 14 is a binding site for UTP. ATP contacts are provided by residues 15 to 20 (SLGKGI) and aspartate 72. Mg(2+) contacts are provided by aspartate 72 and glutamate 140. CTP-binding positions include 147–149 (DIE), 187–192 (KTKPTQ), and lysine 223. UTP-binding positions include 187–192 (KTKPTQ) and lysine 223. Residues 291-543 (TVGMVGKYIE…IKAAIEYQHR (253 aa)) enclose the Glutamine amidotransferase type-1 domain. Glycine 353 contributes to the L-glutamine binding site. The active-site Nucleophile; for glutamine hydrolysis is the cysteine 380. L-glutamine-binding positions include 381–384 (LGMQ), glutamate 404, and arginine 471. Catalysis depends on residues histidine 516 and glutamate 518.

Belongs to the CTP synthase family. As to quaternary structure, homotetramer.

It catalyses the reaction UTP + L-glutamine + ATP + H2O = CTP + L-glutamate + ADP + phosphate + 2 H(+). It carries out the reaction L-glutamine + H2O = L-glutamate + NH4(+). The enzyme catalyses UTP + NH4(+) + ATP = CTP + ADP + phosphate + 2 H(+). It functions in the pathway pyrimidine metabolism; CTP biosynthesis via de novo pathway; CTP from UDP: step 2/2. Its activity is regulated as follows. Allosterically activated by GTP, when glutamine is the substrate; GTP has no effect on the reaction when ammonia is the substrate. The allosteric effector GTP functions by stabilizing the protein conformation that binds the tetrahedral intermediate(s) formed during glutamine hydrolysis. Inhibited by the product CTP, via allosteric rather than competitive inhibition. Catalyzes the ATP-dependent amination of UTP to CTP with either L-glutamine or ammonia as the source of nitrogen. Regulates intracellular CTP levels through interactions with the four ribonucleotide triphosphates. The protein is CTP synthase of Blochmanniella pennsylvanica (strain BPEN).